The primary structure comprises 352 residues: 4-hydroxy-2-oxovalerate aldolase (352 aa).

The 253-residue stretch at 13 to 265 (VRLTDTSLRD…KTGIDFFDIA (253 aa)) folds into the Pyruvate carboxyltransferase domain. Residue 21 to 22 (RD) participates in substrate binding. Asp-22 provides a ligand contact to Mn(2+). His-25 acts as the Proton acceptor in catalysis. Substrate contacts are provided by Ser-175 and His-204. Residues His-204 and His-206 each coordinate Mn(2+). Tyr-295 is a binding site for substrate.

This sequence belongs to the 4-hydroxy-2-oxovalerate aldolase family.

The catalysed reaction is (S)-4-hydroxy-2-oxopentanoate = acetaldehyde + pyruvate. The sequence is that of 4-hydroxy-2-oxovalerate aldolase from Mycobacterium avium (strain 104).